The primary structure comprises 202 residues: Flagellar transcriptional regulator FlhC (202 aa).

Residues Cys137, Cys140, Cys157, and Cys160 each coordinate Zn(2+).

Belongs to the FlhC family. In terms of assembly, heterohexamer composed of two FlhC and four FlhD subunits. Each FlhC binds a FlhD dimer, forming a heterotrimer, and a hexamer assembles by dimerization of two heterotrimers. Zn(2+) is required as a cofactor.

It is found in the cytoplasm. Functions in complex with FlhD as a master transcriptional regulator that regulates transcription of several flagellar and non-flagellar operons by binding to their promoter region. Activates expression of class 2 flagellar genes, including fliA, which is a flagellum-specific sigma factor that turns on the class 3 genes. Also regulates genes whose products function in a variety of physiological pathways. The protein is Flagellar transcriptional regulator FlhC of Variovorax paradoxus (strain S110).